Consider the following 398-residue polypeptide: MSAASPASIIQELASAAKQYENNESGAREALIAQSRALIASLEVPSEFIQHTFWSQPALSAIVRLATDVNLFQYLKDAQEEGLSAEALASKTGMDVSLFARLARHLVAMNVITSRNGVFYGTALSNGLAAENYQQSIRFCHDVSRPSFGAFPSFFKGNGYKTPALGTTDGPFQSAHKVDISFPQWLVGNPPYLQYFNSYMSAYRAGKPNWCDNGFYPVADRLLNGFDASVSDVLLVDVGGGRGHDIATFGSQFSPLPGRLVLQDREQVINSIPADESRQFEATTHDIFTTQPVKNARAYYMHSVPHGFGDEDAVKIMANLVPALAKGYSRVLLNEIVVDEESPVMSATNMDLIMLAHMGAKERTEADWRSILTRAGLKVVNIYSYPGVAESLIEAELA.

Position 144 (serine 144) interacts with (4E,8E)-10-(4,6-dihydroxy-7-methyl-3-oxo-1,3-dihydro-2-benzofuran-5-yl)-4,8-dimethyldeca-4,8-dienoate. Serine 144 contacts 4-farnesyl-3,5-dihydroxy-6-methylphthalide. Serine 144 lines the 6-O-desmethylmycophenolate pocket. Asparagine 197 provides a ligand contact to S-adenosyl-L-homocysteine. Tyrosine 199 contacts (4E,8E)-10-(4,6-dihydroxy-7-methyl-3-oxo-1,3-dihydro-2-benzofuran-5-yl)-4,8-dimethyldeca-4,8-dienoate. Tyrosine 199 is a 4-farnesyl-3,5-dihydroxy-6-methylphthalide binding site. Tyrosine 199 contacts 6-O-desmethylmycophenolate. 7 residues coordinate S-adenosyl-L-homocysteine: tyrosine 203, aspartate 237, glycine 239, histidine 244, aspartate 245, aspartate 264, and arginine 265. Aspartate 264 is an S-adenosyl-L-methionine binding site. Arginine 265 and glutamine 267 together coordinate (4E,8E)-10-(4,6-dihydroxy-7-methyl-3-oxo-1,3-dihydro-2-benzofuran-5-yl)-4,8-dimethyldeca-4,8-dienoate. Arginine 265 lines the 6-O-desmethylmycophenolate pocket. Residues aspartate 286, isoleucine 287, and histidine 302 each contribute to the S-adenosyl-L-homocysteine site. Serine 303 serves as a coordination point for (4E,8E)-10-(4,6-dihydroxy-7-methyl-3-oxo-1,3-dihydro-2-benzofuran-5-yl)-4,8-dimethyldeca-4,8-dienoate. Serine 303 is a 4-farnesyl-3,5-dihydroxy-6-methylphthalide binding site. Serine 303 contributes to the 6-O-desmethylmycophenolate binding site. The Proton acceptor role is filled by histidine 306. Catalysis depends on residues glutamate 335 and glutamate 362.

This sequence belongs to the class I-like SAM-binding methyltransferase superfamily. Cation-independent O-methyltransferase family. COMT subfamily. Homodimer.

It localises to the cytoplasm. Its subcellular location is the cytosol. The enzyme catalyses (4E,8E)-10-(4,6-dihydroxy-7-methyl-3-oxo-1,3-dihydro-2-benzofuran-5-yl)-4,8-dimethyldeca-4,8-dienoate + S-adenosyl-L-methionine = (4E,8E)-10-(4-hydroxy-6-methoxy-7-methyl-3-oxo-1,3-dihydro-2-benzofuran-5-yl)-4,8-dimethyldeca-4,8-dienoate + S-adenosyl-L-homocysteine + H(+). It catalyses the reaction 4-farnesyl-3,5-dihydroxy-6-methylphthalide + S-adenosyl-L-methionine = 4-farnesyl-3,5-dihydroxy-6-methoxylphthalide + S-adenosyl-L-homocysteine + H(+). It carries out the reaction 6-O-desmethylmycophenolate + S-adenosyl-L-methionine = mycophenolate + S-adenosyl-L-homocysteine + H(+). The protein operates within secondary metabolite biosynthesis; terpenoid biosynthesis. O-methyltransferase; part of the gene cluster that mediates the biosynthesis of mycophenolic acid (MPA), the first isolated antibiotic natural product in the world obtained from a culture of Penicillium brevicompactum in 1893. MpaG methylates farnesyl-DHMP-3C (FDHMP-3C) to yield MFDHMP-3C. The first step of the pathway is the synthesis of 5-methylorsellinic acid (5MOA) by the cytosolic polyketide synthase mpaC. 5MOA is then converted to the phthalide compound 5,7-dihydroxy-4,6-dimethylphthalide (DHMP) by the endoplasmic reticulum-bound cytochrome P450 monooxygenase mpaDE. MpaDE first catalyzes hydroxylation of 5-MOA to 4,6-dihydroxy-2-(hydroxymethyl)-3-methylbenzoic acid (DHMB). MpaDE then acts as a lactone synthase that catalyzes the ring closure to convert DHMB into DHMP. The next step is the prenylation of DHMP by the Golgi apparatus-associated prenyltransferase mpaA to yield farnesyl-DHMP (FDHMP). The ER-bound oxygenase mpaB then mediates the oxidative cleavage the C19-C20 double bond in FDHMP to yield FDHMP-3C via a mycophenolic aldehyde intermediate. The O-methyltransferase mpaG catalyzes the methylation of FDHMP-3C to yield MFDHMP-3C. MpaG and mpaB can also switch the order in which they act and, in this case, the conversion of FDHMP to MFDHMP-3C can take place via 5-O-methyl-FDHMP (MFDHMP). After the cytosolic methylation of FDHMP-3C, MFDHMP-3C enters into peroxisomes probably via free diffusion due to its low molecular weight. Upon a peroxisomal CoA ligation reaction, catalyzed by a beta-oxidation component enzyme acyl-CoA ligase ACL891, MFDHMP-3C-CoA would then be restricted to peroxisomes for the following beta-oxidation pathway steps. The peroxisomal beta-oxidation machinery than converts MFDHMP-3C-CoA into MPA_CoA, via a beta-oxidation chain-shortening process. Finally mpaH acts as a peroxisomal acyl-CoA hydrolase with high substrate specificity toward MPA-CoA to release the final product MPA. MpaH can also hydrolyze DMMPA-CoA to release demethylmycophenolic acid (DMMPA) that is further converted to MPA by mpaG. This chain is O-methyltransferase mpaG, found in Penicillium brevicompactum.